The sequence spans 294 residues: MAAAYPWTLFLGMLVMVSGTMGAALRKPVDVAFGRNYVPTWAFDHIKYFNGGNEIQLHLDKYTGTGFQSKGSYLFGHFSMQMKLVPGDSAGTVTAFYLSSQNSEHDEIDFEFLGNRTGQPYILQTNVFTGGKGDREQRIYLWFDPTKEFHYYSVLWNMYMIVFLVDDVPIRVFKNCKDLGVKFPFNQPMKIYSSLWNADDWATRGGLEKTDWSKAPFIASYRSFHIDGCEASVEAKFCATQGARWWDQKEFQDLDAFQYRRLSWVRQKYTIYNYCTDRSRYPSMPPECKRDRDI.

The first 22 residues, 1–22, serve as a signal peptide directing secretion; that stretch reads MAAAYPWTLFLGMLVMVSGTMG. Residues 23–221 form the GH16 domain; it reads AALRKPVDVA…WSKAPFIASY (199 aa). Catalysis depends on Glu-107, which acts as the Nucleophile. Catalysis depends on Glu-111, which acts as the Proton donor. Position 111 (Glu-111) interacts with xyloglucan. N-linked (GlcNAc...) asparagine glycosylation occurs at Asn-115. Residues 124–126, 134–136, 200–201, and Gly-205 contribute to the xyloglucan site; these read QTN, DRE, and DW. 2 cysteine pairs are disulfide-bonded: Cys-229-Cys-238 and Cys-275-Cys-288. Arg-280 serves as a coordination point for xyloglucan.

It belongs to the glycosyl hydrolase 16 family. XTH group 1 subfamily. Post-translationally, contains at least one intrachain disulfide bond essential for its enzymatic activity. In terms of processing, N-glycosylated. Contains N-acetylglucosamine and mannose. Glycosylation is not essential for its catalytic activity. Expressed in mature gelatinous (G) cell wall layer of the tension wood fibers. Highly expressed in the outer zone of the G layer close to the secondary S2 layer. Not expressed in the mature walls of the ray cells or vessel elements (at protein level). Highest expression in both the phloem/cambium and differentiating xylem of the mature stem containing primarily secondary cell wall forming cells, in root tips and young roots. Expressed at low levels in apical bud.

The protein resides in the secreted. It is found in the cell wall. Its subcellular location is the extracellular space. It localises to the apoplast. The protein localises to the cytoplasm. It catalyses the reaction breaks a beta-(1-&gt;4) bond in the backbone of a xyloglucan and transfers the xyloglucanyl segment on to O-4 of the non-reducing terminal glucose residue of an acceptor, which can be a xyloglucan or an oligosaccharide of xyloglucan.. Functionally, catalyzes xyloglucan endotransglycosylation (XET). Cleaves and religates xyloglucan polymers. Does not catalyze xyloglucan endohydrolysis (XEH). Involved in early phases of secondary (S) cell wall formation in fibers of the xylem and phloem vascular tissues of wood stems. May play a role in restructuring primary cell walls, possibly creating and reinforcing the connections between the primary and S cell wall layers. Functions in the gelatinous (G) layers of the tension wood fibers that are involved in bending of the wood stems. May play a role in G fiber shrinking by repairing broken xyloglucan cross-links between G and S2 cell wall layers via its XET activity to maintain connections between the layers. This Populus tremula x Populus tremuloides (Hybrid aspen) protein is Xyloglucan endotransglucosylase protein 34.